The primary structure comprises 474 residues: MAQETLVDTSIQGKIVQCIGAVVDVEFARNQMPKIYDALKMEGSSLTLEVQQQLGDGIVRTIALGTSDGLRRGNIVYNTGANITVPVGKATLGRIMDVLGAPIDERGPVDQTLTAPIHRKAPAYDELSPSQELLETGIKVIDLVCPFAKGGKVGLFGGAGVGKTVNMMELINNIAKAHSGLSVFAGVGERTREGNDFYHEMADSGVVNLDKLEDSKVAMVYGQMNEPPGNRLRVALTGLTIAESFRDEGRDVLFFVDNIYRYTLAGTEVSALLGRMPSAVGYQPTLAEEMGRLQERITSTKVGSITSIQAVYVPADDLTDPSPATTFAHLDSTVVLSRDIASLGIYPAVDPLDSTSRQLSPAVVGEDHYNTARAVQGTLQRYKELRDIIAILGMDELAPEDKLAVARARKIQRFLSQPFHVAEVFTGSPGKYVSLAETIRGFKMIVAGECDHLPEQAFYMVGTIDEAFEKAKKM.

157–164 (GGAGVGKT) contributes to the ATP binding site.

It belongs to the ATPase alpha/beta chains family. F-type ATPases have 2 components, CF(1) - the catalytic core - and CF(0) - the membrane proton channel. CF(1) has five subunits: alpha(3), beta(3), gamma(1), delta(1), epsilon(1). CF(0) has three main subunits: a(1), b(2) and c(9-12). The alpha and beta chains form an alternating ring which encloses part of the gamma chain. CF(1) is attached to CF(0) by a central stalk formed by the gamma and epsilon chains, while a peripheral stalk is formed by the delta and b chains.

The protein localises to the cell inner membrane. It carries out the reaction ATP + H2O + 4 H(+)(in) = ADP + phosphate + 5 H(+)(out). In terms of biological role, produces ATP from ADP in the presence of a proton gradient across the membrane. The catalytic sites are hosted primarily by the beta subunits. The sequence is that of ATP synthase subunit beta 1 from Polaromonas naphthalenivorans (strain CJ2).